We begin with the raw amino-acid sequence, 287 residues long: F-actin-capping protein subunit beta (287 aa).

Residue Ser2 is modified to N-acetylserine. A phosphoserine mark is found at Ser85 and Ser92.

It belongs to the F-actin-capping protein beta subunit family. Component of the F-actin capping complex, composed of a heterodimer of an alpha and a beta subunit. Interacts with BSP1 (via C-terminus); leading to recruitment of the F-actin capping complex to actin cortical patches and the acomyosin contractile ring.

Its subcellular location is the cytoplasm. The protein localises to the cytoskeleton. It localises to the actin patch. The protein resides in the bud. It is found in the bud tip. Functionally, F-actin-capping proteins bind in a Ca(2+)-independent manner to the fast growing ends of actin filaments (barbed end) thereby blocking the exchange of subunits at these ends. Unlike other capping proteins (such as gelsolin and severin), these proteins do not sever actin filaments. The sequence is that of F-actin-capping protein subunit beta (CAP2) from Saccharomyces cerevisiae (strain ATCC 204508 / S288c) (Baker's yeast).